Here is a 511-residue protein sequence, read N- to C-terminus: N-acetylgalactosamine-6-O-sulfatase (511 aa).

Serine 83 is modified (3-oxoalanine (Ser)).

It belongs to the sulfatase family. The conversion to 3-oxoalanine (also known as C-formylglycine, FGly), of a serine or cysteine residue in prokaryotes and of a cysteine residue in eukaryotes, is critical for catalytic activity.

Functionally, exosulfatase involved in the degradation of the glycosaminoglycans (GAGs) chondroitin sulfate (CS) and dermatan sulfate (DS). Catalyzes the hydrolysis of the 6-sulfate groups of the N-acetyl-D-galactosamine 6-sulfate units. GAG-specific sulfatases play a key role in the persistence of the major human gut symbiont B.thetaiotaomicron in the host gastrointestinal tract. This Bacteroides thetaiotaomicron (strain ATCC 29148 / DSM 2079 / JCM 5827 / CCUG 10774 / NCTC 10582 / VPI-5482 / E50) protein is N-acetylgalactosamine-6-O-sulfatase.